A 610-amino-acid polypeptide reads, in one-letter code: Myoneurin (610 aa).

A BTB domain is found at 24 to 89 (CDCTIVIGEF…IYTGTLNLDS (66 aa)). The tract at residues 169–197 (QGALAKKSSQTKKKKKAFNSPKTGQNKTV) is disordered. 2 short sequence motifs (nuclear localization signal) span residues 174 to 190 (KKSSQTKKKKKAFNSPK) and 257 to 262 (KRKRGK). Positions 188-197 (SPKTGQNKTV) are enriched in polar residues. S289 is modified (phosphoserine). 8 consecutive C2H2-type zinc fingers follow at residues 302–324 (PMCNTCGKVFSEASSLRRHMRIH), 330–352 (YVCHLCGKAFTQCNQLKTHVRTH), 358–381 (YKCELCDKGFAQKCQLVFHSRMHH), 387–409 (YKCDVCNLQFATSSNLKIHARKH), 415–437 (YVCDRCGQRFAQASTLTYHVRRH), 443–465 (YVCDTCGKAFAVSSSLITHSRKH), 471–493 (YICGICGKSFISSGELNKHFRSH), and 499–522 (FICELCGNSYTDIKNLKKHKTKVH). The tract at residues 521 to 556 (VHSGADKTLDSSAEDHTLSEQDSIQKSPLSETMDVK) is disordered. A compositionally biased stretch (basic and acidic residues) spans 523–539 (SGADKTLDSSAEDHTLS). Positions 540-550 (EQDSIQKSPLS) are enriched in polar residues.

Belongs to the krueppel C2H2-type zinc-finger protein family. As to expression, mainly expressed in the neuromuscular system. Located in and around synaptic myonuclei in adult muscle. Expression is dysregulated after nerve injury. Also found in the testis, ovary and placenta.

It localises to the nucleus. This chain is Myoneurin (MYNN), found in Homo sapiens (Human).